The primary structure comprises 957 residues: Exoribonuclease II, mitochondrial (957 aa).

A mitochondrion-targeting transit peptide spans methionine 1–isoleucine 54. In terms of domain architecture, RNB spans arginine 503 to leucine 843.

The protein belongs to the RNR ribonuclease family.

It localises to the mitochondrion. The enzyme catalyses Exonucleolytic cleavage in the 3'- to 5'-direction to yield nucleoside 5'-phosphates.. Its function is as follows. Required for intron-independent turnover and processing of mitochondrial RNA. Participates in 3'-mtRNA processing where it hydrolyzes single-stranded RNA or partially double-stranded RNA with 3'-single-stranded tails. The protein is Exoribonuclease II, mitochondrial (rpm1) of Schizosaccharomyces pombe (strain 972 / ATCC 24843) (Fission yeast).